Here is a 413-residue protein sequence, read N- to C-terminus: Aspartate aminotransferase, cytoplasmic (413 aa).

L-aspartate is bound by residues Gly-39 and Trp-141. Ser-149 is modified (phosphoserine). Asn-195 contributes to the L-aspartate binding site. At Lys-259 the chain carries N6-(pyridoxal phosphate)lysine. Arg-387 contacts L-aspartate.

The protein belongs to the class-I pyridoxal-phosphate-dependent aminotransferase family. In terms of assembly, homodimer. Pyridoxal 5'-phosphate serves as cofactor.

It localises to the cytoplasm. The enzyme catalyses L-aspartate + 2-oxoglutarate = oxaloacetate + L-glutamate. It catalyses the reaction L-cysteine + 2-oxoglutarate = 2-oxo-3-sulfanylpropanoate + L-glutamate. The catalysed reaction is (2S)-2-aminobutanoate + 2-oxoglutarate = 2-oxobutanoate + L-glutamate. It carries out the reaction 3-sulfino-L-alanine + 2-oxoglutarate = 3-sulfinopyruvate + L-glutamate. In terms of biological role, biosynthesis of L-glutamate from L-aspartate or L-cysteine. Important regulator of levels of glutamate, the major excitatory neurotransmitter of the vertebrate central nervous system. Acts as a scavenger of glutamate in brain neuroprotection. The aspartate aminotransferase activity is involved in hepatic glucose synthesis during development and in adipocyte glyceroneogenesis. Using L-cysteine as substrate, regulates levels of mercaptopyruvate, an important source of hydrogen sulfide. Mercaptopyruvate is converted into H(2)S via the action of 3-mercaptopyruvate sulfurtransferase (3MST). Hydrogen sulfide is an important synaptic modulator and neuroprotectant in the brain. The chain is Aspartate aminotransferase, cytoplasmic from Pan troglodytes (Chimpanzee).